Reading from the N-terminus, the 267-residue chain is uncharacterized protein (267 aa).

The WD repeat unit spans residues 50-90 (PGLNAVTASKFSPDGRWLLNIADGSGYVQLWDTAKGERVKT).

This is an uncharacterized protein from Deinococcus radiodurans (strain ATCC 13939 / DSM 20539 / JCM 16871 / CCUG 27074 / LMG 4051 / NBRC 15346 / NCIMB 9279 / VKM B-1422 / R1).